The primary structure comprises 543 residues: Germacrene A synthase (543 aa).

The Mg(2+) site is built by D296, D300, D439, and E447. The DDXXD motif motif lies at 296–300; the sequence is DDTYD.

It belongs to the terpene synthase family. Tpsa subfamily. Mg(2+) is required as a cofactor. Mn(2+) serves as cofactor. As to expression, barely detectable in leaves.

Its subcellular location is the plastid. The protein resides in the chloroplast. It carries out the reaction (2E,6E)-farnesyl diphosphate = germacrene A + diphosphate. It catalyses the reaction (2E,6E)-farnesyl diphosphate = (1S,2S,4R)-beta-elemene + diphosphate. It participates in secondary metabolite biosynthesis; terpenoid biosynthesis. Functionally, sesquiterpene synthase involved in the biosynthesis of volatile compounds widely used in aromatherapy and folk medicine, and present in culinary herbs. Mediates the conversion of (2E,6E)-farnesyl diphosphate (FPP) into germacrene A and beta-elemene. Not able to use (2E)-geranyl diphosphate (GPP) as substrate. The sequence is that of Germacrene A synthase from Lavandula viridis (Green lavender).